A 136-amino-acid polypeptide reads, in one-letter code: Histone H3, embryonic (136 aa).

Residues 1-43 form a disordered region; it reads MARTKQTARKSTGGKAPRKQLATKAARKSAPATGGVKKPHRYR. K5 carries the post-translational modification N6-methylated lysine. At K10 the chain carries N6-acetyllysine; alternate. K10 is subject to N6-methylated lysine; alternate. S11 bears the Phosphoserine mark. N6-acetyllysine is present on residues K15 and K24. K28, K37, and K80 each carry N6-methylated lysine.

This sequence belongs to the histone H3 family. The nucleosome is a histone octamer containing two molecules each of H2A, H2B, H3 and H4 assembled in one H3-H4 heterotetramer and two H2A-H2B heterodimers. The octamer wraps approximately 147 bp of DNA. In terms of processing, acetylation is generally linked to gene activation. Post-translationally, methylation at Lys-5 is linked to gene activation. Methylation at Lys-10 is linked to gene repression.

Its subcellular location is the nucleus. The protein localises to the chromosome. Core component of nucleosome. Nucleosomes wrap and compact DNA into chromatin, limiting DNA accessibility to the cellular machineries which require DNA as a template. Histones thereby play a central role in transcription regulation, DNA repair, DNA replication and chromosomal stability. DNA accessibility is regulated via a complex set of post-translational modifications of histones, also called histone code, and nucleosome remodeling. The sequence is that of Histone H3, embryonic from Strongylocentrotus purpuratus (Purple sea urchin).